Here is a 217-residue protein sequence, read N- to C-terminus: uncharacterized protein (217 aa).

The next 2 membrane-spanning stretches (helical) occupy residues 151 to 171 (LIPF…HSLF) and 177 to 197 (ISFH…FILF).

The protein localises to the mitochondrion membrane. This is an uncharacterized protein from Schizosaccharomyces pombe (strain 972 / ATCC 24843) (Fission yeast).